The primary structure comprises 292 residues: NAD kinase (292 aa).

Asp73 (proton acceptor) is an active-site residue. NAD(+) is bound by residues 73–74 (DG), 147–148 (NE), His158, Arg175, Asp177, 188–193 (TAYSLS), and Gln247.

This sequence belongs to the NAD kinase family. Requires a divalent metal cation as cofactor.

Its subcellular location is the cytoplasm. It carries out the reaction NAD(+) + ATP = ADP + NADP(+) + H(+). Involved in the regulation of the intracellular balance of NAD and NADP, and is a key enzyme in the biosynthesis of NADP. Catalyzes specifically the phosphorylation on 2'-hydroxyl of the adenosine moiety of NAD to yield NADP. The chain is NAD kinase from Serratia proteamaculans (strain 568).